The following is a 302-amino-acid chain: MPCVGLIVNDGKELAVETALTLQSRLEQAGIEVVRASSSGGMVGFANPDQHLRLLGYNACVPEGFDASMALAIVLGGDGTVLSAARQTAPVQVPILTINTGHLGFLAEAYLADLDRVIEQVLNKQWTIEERCTLVVSVLRGDQCRWEALSLNEMALHREPLTSMCHFEVAIGRHAPVDISADGVILSTPTGSTAYALSAGGPVITPECPVLQLAPIAPHSLASRALVFSDQEPVTVFPATADRLMMVVDGSAGCYVWPEDRVLIRRSDHPVRFVRLADHEFFQVLRNKLGWGLPHVAKPDRP.

Asp78 acts as the Proton acceptor in catalysis. NAD(+) is bound by residues Asp78 to Gly79, Asn152 to Glu153, Asp182, Thr193 to Ser198, and Ala217.

It belongs to the NAD kinase family. It depends on a divalent metal cation as a cofactor.

Its subcellular location is the cytoplasm. It carries out the reaction NAD(+) + ATP = ADP + NADP(+) + H(+). Its function is as follows. Involved in the regulation of the intracellular balance of NAD and NADP, and is a key enzyme in the biosynthesis of NADP. Catalyzes specifically the phosphorylation on 2'-hydroxyl of the adenosine moiety of NAD to yield NADP. The polypeptide is NAD kinase 2 (Prochlorococcus marinus (strain MIT 9313)).